Consider the following 968-residue polypeptide: Glycine dehydrogenase (decarboxylating) (968 aa).

At lysine 712 the chain carries N6-(pyridoxal phosphate)lysine.

It belongs to the GcvP family. In terms of assembly, the glycine cleavage system is composed of four proteins: P, T, L and H. Pyridoxal 5'-phosphate is required as a cofactor.

The catalysed reaction is N(6)-[(R)-lipoyl]-L-lysyl-[glycine-cleavage complex H protein] + glycine + H(+) = N(6)-[(R)-S(8)-aminomethyldihydrolipoyl]-L-lysyl-[glycine-cleavage complex H protein] + CO2. The glycine cleavage system catalyzes the degradation of glycine. The P protein binds the alpha-amino group of glycine through its pyridoxal phosphate cofactor; CO(2) is released and the remaining methylamine moiety is then transferred to the lipoamide cofactor of the H protein. In Prochlorococcus marinus (strain NATL1A), this protein is Glycine dehydrogenase (decarboxylating).